The following is a 773-amino-acid chain: Jhy protein homolog (773 aa).

Disordered regions lie at residues 1 to 247, 325 to 373, 496 to 526, 596 to 615, and 713 to 743; these read MSHS…SKQY, WSQY…KSLV, KKHP…QPKL, ESES…KISR, and AKTI…KEDT. The segment covering 10 to 28 has biased composition (polar residues); the sequence is VSIQSPVHHTNIKVQSTEP. The segment covering 29–43 has biased composition (basic and acidic residues); sequence SFKKEDLHLISKDSL. The span at 48-57 shows a compositional bias: polar residues; the sequence is ESPTQKIKSQ. Over residues 59–84 the composition is skewed to acidic residues; it reads DLEDQIQDNDMEPDSLEEENLSETEE. A compositionally biased stretch (basic and acidic residues) spans 112-134; sequence PTEDKYSHIRYDPNWKSKKEEGK. Polar residues predominate over residues 145-154; sequence VDSSTENLTL. Positions 216 to 229 are enriched in low complexity; sequence SNLSRYLKSSSSRS. A compositionally biased stretch (polar residues) spans 334–351; that stretch reads SSGPRGQSSETTNGQQPS. The span at 353–369 shows a compositional bias: basic residues; it reads KPAKHKIRKQRRHRHGP. Residues 500–516 show a composition bias toward polar residues; the sequence is SGSQKGSQSVSNINRQA. Positions 598 to 610 are enriched in low complexity; that stretch reads ESQLSSERSQRNQ. Over residues 728–743 the composition is skewed to basic and acidic residues; that stretch reads ASKEKKTPTHAGKEDT.

Functionally, required for the normal development of cilia in brain ependymal cells lining the ventricular surfaces. This chain is Jhy protein homolog (JHY), found in Bos taurus (Bovine).